A 381-amino-acid chain; its full sequence is L-lactate dehydrogenase (381 aa).

The FMN hydroxy acid dehydrogenase domain occupies 1–380 (MIISASTDYR…SADSLVRELG (380 aa)). Position 24 (Y24) interacts with substrate. Residues S106 and Q127 each coordinate FMN. Residue Y129 coordinates substrate. Residue T155 participates in FMN binding. R164 provides a ligand contact to substrate. FMN is bound at residue K251. Residue H275 is the Proton acceptor of the active site. A substrate-binding site is contributed by R278. Residue 306–330 (DSGIRTGLDVVRMIALGADSVLLGR) participates in FMN binding.

Belongs to the FMN-dependent alpha-hydroxy acid dehydrogenase family. In terms of assembly, homotetramer. The cofactor is FMN.

Its subcellular location is the cell inner membrane. The catalysed reaction is (S)-lactate + A = pyruvate + AH2. Its function is as follows. Catalyzes the conversion of L-lactate to pyruvate. Is coupled to the respiratory chain. This is L-lactate dehydrogenase from Pseudomonas paraeruginosa (strain DSM 24068 / PA7) (Pseudomonas aeruginosa (strain PA7)).